A 503-amino-acid chain; its full sequence is Transcription termination/antitermination protein NusA (503 aa).

Positions 139 to 203 (GDIINGIVKR…KGPQIFLSRV (65 aa)) constitute an S1 motif domain. The region spanning 308-378 (SHKVEVVVSQ…LDVEEVIGQL (71 aa)) is the KH domain.

Belongs to the NusA family. As to quaternary structure, monomer. Binds directly to the core enzyme of the DNA-dependent RNA polymerase and to nascent RNA.

It localises to the cytoplasm. Participates in both transcription termination and antitermination. The chain is Transcription termination/antitermination protein NusA from Rickettsia prowazekii (strain Madrid E).